The primary structure comprises 614 residues: MSRFARLLLMVVALFFTNAWAKTVKETLRITWKEGAPNGQARELIYTNGQFPSPTLVWDEDDDVEITVYNEMAKNVTVHWHGLDQKDTPWSDGTPGLSQRPIQPGNKFVYKFKASPPGNHWYHSHEKMSLVDGLYGAIHIRPKGDRTGLWSQISQDKDDIKAMENAAHDPEYLVVSDWSQYTSEEYWKISTDSGLLVFCLDSILVNGKGEVYCPGQKFLQAELAPGLVEDAFPPGTEVSDKGCFPADLDQVQGGPWNITKRPDLIPPRVQEGCVASSHENATIVVDPSRNNGWVSMHIVAAATIAQITFSVDSHEFWLYEIDGNYVNPRKFVSAVMSAGETFSVMIKLDQKPGRYTMRIPNSGASQVLGGFAEMVYKGCESEEKTGKAYLSYGGNPTSPDVEKNSFFPWQLDTDHMSPWPPNKPRPGNADEEHLLVLGRVGAPYNYTMNTKYLYPVDFQNDDPLLFYPNATRDTENDGLVLRTKNGSWVDLILQVSTLPGDTSSFEHFMHKHGSKTWRIGFGTGVWNYTSVEEAIKERPKDFNLETPGLRDTWITAFSIGGEAYWSVFRYFVDNPGPWLFHCHIELHLMGGMGIAILDGVDAWPEHIPEEYQLC.

Positions 1-21 are cleaved as a signal peptide; it reads MSRFARLLLMVVALFFTNAWA. 2 Plastocyanin-like domains span residues 30–143 and 172–360; these read ITWK…IRPK and YLVV…MRIP. Asparagine 75 is a glycosylation site (N-linked (GlcNAc...) asparagine). Positions 79, 81, 123, and 125 each coordinate Cu cation. 5 N-linked (GlcNAc...) asparagine glycosylation sites follow: asparagine 257, asparagine 280, asparagine 445, asparagine 469, and asparagine 485. A Plastocyanin-like 3 domain is found at 469–599; the sequence is NATRDTENDG…GGMGIAILDG (131 aa). Cu cation-binding residues include histidine 507, histidine 510, and histidine 512. Residue asparagine 527 is glycosylated (N-linked (GlcNAc...) asparagine). Residues histidine 581, cysteine 582, histidine 583, and histidine 587 each contribute to the Cu cation site.

The protein belongs to the multicopper oxidase family. Requires Cu cation as cofactor.

The protein resides in the cell surface. Its pathway is pigment biosynthesis. Laccase; part of the Pks1 gene cluster that mediates the biosynthesis of an anthraquinone derivative pigment that contributes to conidial pigmentation that provides protection from UV radiation, heat and cold stress. The polyketide synthase Pks1 produces 1-acetyl-2,4,6,8-tetrahydroxy-9,10-anthraquinone though condensation of acetyl-CoA with malonyl-CoA. The dehydratase EthD and the laccase Mlac1 further convert the anthraquinone derivative into the final conidial pigment. The polypeptide is Laccase 1 (Metarhizium majus (strain ARSEF 297)).